The chain runs to 433 residues: Anthranilate synthase component 1 (433 aa).

L-tryptophan-binding positions include Ser-29 and 219-221; that span reads PYT. 253–254 is a chorismate binding site; that stretch reads GT. Residue Glu-280 coordinates Mg(2+). Chorismate is bound by residues Tyr-368, Arg-388, 402 to 404, and Gly-404; that span reads GAG. Glu-417 lines the Mg(2+) pocket.

It belongs to the anthranilate synthase component I family. In terms of assembly, heterotetramer consisting of two non-identical subunits: a beta subunit (TrpG) and a large alpha subunit (TrpE). It depends on Mg(2+) as a cofactor.

The enzyme catalyses chorismate + L-glutamine = anthranilate + pyruvate + L-glutamate + H(+). It participates in amino-acid biosynthesis; L-tryptophan biosynthesis; L-tryptophan from chorismate: step 1/5. Feedback inhibited by tryptophan. Part of a heterotetrameric complex that catalyzes the two-step biosynthesis of anthranilate, an intermediate in the biosynthesis of L-tryptophan. In the first step, the glutamine-binding beta subunit (TrpG) of anthranilate synthase (AS) provides the glutamine amidotransferase activity which generates ammonia as a substrate that, along with chorismate, is used in the second step, catalyzed by the large alpha subunit of AS (TrpE) to produce anthranilate. In the absence of TrpG, TrpE can synthesize anthranilate directly from chorismate and high concentrations of ammonia. The polypeptide is Anthranilate synthase component 1 (trpE) (Thermococcus kodakarensis (strain ATCC BAA-918 / JCM 12380 / KOD1) (Pyrococcus kodakaraensis (strain KOD1))).